Reading from the N-terminus, the 228-residue chain is MTQDELKALVAQAAADYVKQEVPEGAVLGVGTGSTANLFIDAVAAFKERFAGAVSSSEASTRRLQQHGFKVLDLNEVDEIPVYVDGADEIDASGAMIKGGGGALTREKIVASVAKRFVCIADGSKLVQTMGTFPLPVEVIPMARAAVARKLQALGGQPRLRMTKEGGIYKTDNGNVILDVAGLKIDDPRGLEQAVNQVPGVVTVGLFALRGADVLLLGTGDGVQRTDY.

Residues 32–35 (TGST), 85–88 (DGAD), and 98–101 (KGGG) contribute to the substrate site. Glu107 (proton acceptor) is an active-site residue. Lys125 contributes to the substrate binding site.

Belongs to the ribose 5-phosphate isomerase family. In terms of assembly, homodimer.

The catalysed reaction is aldehydo-D-ribose 5-phosphate = D-ribulose 5-phosphate. The protein operates within carbohydrate degradation; pentose phosphate pathway; D-ribose 5-phosphate from D-ribulose 5-phosphate (non-oxidative stage): step 1/1. Catalyzes the reversible conversion of ribose-5-phosphate to ribulose 5-phosphate. This Cupriavidus necator (strain ATCC 17699 / DSM 428 / KCTC 22496 / NCIMB 10442 / H16 / Stanier 337) (Ralstonia eutropha) protein is Ribose-5-phosphate isomerase A.